A 637-amino-acid polypeptide reads, in one-letter code: MPIQILPPQLANQIAAGEVVERPASVVKELVENSLDAGATRIQIDIENGGATLIRIRDNGFGIPKEELSLALARHATSKIATIDDLEAILSFGFRGEALASISSVSRLTLTSRTADQQEAWQVFVQGREQESTVNPASHPVGTTVEVANLFFNMPARRKFLRTDKTEFGHIDEVIRRIALAKSHIAFTLTHNGKIVRQYKSAVEDTQKLKRLAAICGNDFVRQALYIDWKHDNLHLSGWVTTPTFARQQNDLSYCYVNGRMVKDKVINHAIRQAYAEHLGSERYPAFVLFLDLNPNDVDVNVHPTKHEVRFQQSRLIHDFIFQGVTNALLSAEQFDFSASTESEKNNEIREPQADYQNVTPTIRPNRAAAGQNMFELNSPTQTKQTNVPITTKAYPTPAHSGQAGYSTTPSNPPPHFMPQSARSVSPFEREKVTKTEQRIYAELLKTPEVEAPPTSIQSSLLSSSSLLHAVALVNNQALLLQRDTAFYLLPLNKLQKMRLELLLTLPNTPQQMLLIPVVFRLSDKQQAQWRQQKIWFEQSGFEFIENPVQHRITLNAVPQCLRHQNLQKIVIALLNRSLQKTEKFLTALLDLVELPDCQVLANAVNILQETELLLDQQTTMKLDNLLIPIDFSSYLS.

It belongs to the DNA mismatch repair MutL/HexB family.

This protein is involved in the repair of mismatches in DNA. It is required for dam-dependent methyl-directed DNA mismatch repair. May act as a 'molecular matchmaker', a protein that promotes the formation of a stable complex between two or more DNA-binding proteins in an ATP-dependent manner without itself being part of a final effector complex. This chain is DNA mismatch repair protein MutL, found in Actinobacillus succinogenes (strain ATCC 55618 / DSM 22257 / CCUG 43843 / 130Z).